Reading from the N-terminus, the 332-residue chain is Alpha-N-acetylgalactosaminide alpha-2,6-sialyltransferase 6 (332 aa).

Residues 1–26 (MACPRPLSQCDHTPLPGPPAGHWPLP) form a disordered region. The Cytoplasmic segment spans residues 1–42 (MACPRPLSQCDHTPLPGPPAGHWPLPLSRRRREMKSNKEQRS). Residues 43–63 (AVFVILFALITILILYSSSSA) form a helical; Signal-anchor for type II membrane protein membrane-spanning segment. Residues 64–332 (NEVFHYGSLR…GITFSHPSWT (269 aa)) lie on the Lumenal side of the membrane. An N-linked (GlcNAc...) asparagine glycan is attached at Asn-97. A disulfide bridge links Cys-107 with Cys-255.

The protein belongs to the glycosyltransferase 29 family.

It localises to the golgi apparatus membrane. It carries out the reaction a ganglioside GM1b (d18:1(4E)) + CMP-N-acetyl-beta-neuraminate = a ganglioside GD1alpha (d18:1(4E)) + CMP + H(+). The enzyme catalyses N-acetyl-alpha-neuraminosyl-(2-&gt;3)-beta-D-galactosyl-(1-&gt;3)-N-acetyl-beta-D-glucosaminyl-(1-&gt;3)-beta-D-galactosyl-(1-&gt;4)-beta-D-glucosyl-(1&lt;-&gt;1')-N-acyl-sphing-4-enine + CMP-N-acetyl-beta-neuraminate = N-acetyl-alpha-neuraminosyl-(2-&gt;3)-beta-D-galactosyl-(1-&gt;3)-[N-acetyl-alpha-neuraminosyl-(2-&gt;6)]-N-acetyl-beta-D-glucosaminyl-(1-&gt;3)-beta-D-galactosyl-(1-&gt;4)-beta-D-glucosyl-(1&lt;-&gt;1')-N-acyl-sphing-4-enine + CMP + H(+). The catalysed reaction is a globoside MSGG + CMP-N-acetyl-beta-neuraminate = a globoside DSGG + CMP + H(+). It catalyses the reaction a ganglioside GD1a (d18:1(4E)) + CMP-N-acetyl-beta-neuraminate = a ganglioside GT1aalpha (d18:1(4E)) + CMP + H(+). It carries out the reaction a ganglioside GT1b (d18:1(4E)) + CMP-N-acetyl-beta-neuraminate = a ganglioside GQ1balpha (d18:1(4E)) + CMP + H(+). The enzyme catalyses 3-O-[alpha-Neu5Ac-(2-&gt;3)-beta-D-Gal-(1-&gt;3)-alpha-D-GalNAc]-L-Ser-[protein] + CMP-N-acetyl-beta-neuraminate = a 3-O-{alpha-Neu5Ac-(2-&gt;3)-beta-D-Gal-(1-&gt;3)-[alpha-Neu5Ac-(2-&gt;6)]-alpha-D-GalNAc}-L-seryl-[protein] + CMP + H(+). The catalysed reaction is 3-O-[alpha-Neu5Ac-(2-&gt;3)-beta-D-Gal-(1-&gt;3)-alpha-D-GalNAc]-L-Thr-[protein] + CMP-N-acetyl-beta-neuraminate = a 3-O-{alpha-Neu5Ac-(2-&gt;3)-beta-D-Gal-(1-&gt;3)-[alpha-Neu5Ac-(2-&gt;6)]-alpha-D-GalNAc}-L-threonyl-[protein] + CMP + H(+). In terms of biological role, transfers the sialyl group (N-acetyl-alpha-neuraminyl or NeuAc) from CMP-NeuAc onto glycoproteins and glycolipids, forming an alpha-2,6-linkage. Produces branched type disialyl structures by transfer of a sialyl group onto the GalNAc or GlcNAc residue inside backbone core chains having a terminal sialic acid with an alpha-2,3-linkage on Gal. ST6GalNAcVI prefers glycolipids to glycoproteins, predominantly catalyzing the biosynthesis of ganglioside GD1alpha from GM1b. Besides GMb1, MSGG and other glycolipids, it shows activity towards sialyl Lc4Cer generating disialyl Lc4Cer, which can lead to the synthesis of disialyl Lewis a (Le(a)), suggested to be a cancer-associated antigen. Also has activity toward GD1a and GT1b, and can generate DSGG (disialylgalactosylgloboside) from MSGG (monosialylgalactosylgloboside). This chain is Alpha-N-acetylgalactosaminide alpha-2,6-sialyltransferase 6 (ST6GALNAC6), found in Bos taurus (Bovine).